A 501-amino-acid chain; its full sequence is Cytochrome P450 monooxygenase janQ (501 aa).

A helical transmembrane segment spans residues 1–16 (MVLGLLAFIWLMRAWR). The N-linked (GlcNAc...) asparagine glycan is linked to asparagine 132. Cysteine 439 contributes to the heme binding site.

Belongs to the cytochrome P450 family. Requires heme as cofactor.

It localises to the membrane. It functions in the pathway secondary metabolite biosynthesis. Functionally, cytochrome P450 monooxygenase; part of the gene cluster that mediates the biosynthesis of the indole diterpenes janthitremanes such as shearinine K or shearinine A. The geranylgeranyl diphosphate (GGPP) synthase janG catalyzes the first step in janthitremane biosynthesis via conversion of farnesyl pyrophosphate and isopentyl pyrophosphate into geranylgeranyl pyrophosphate (GGPP). Condensation of indole-3-glycerol phosphate with GGPP by the prenyl transferase janC then forms 3-geranylgeranylindole (3-GGI). Epoxidation by the FAD-dependent monooxygenase janM leads to a epoxidized-GGI that is substrate of the terpene cyclase janB for cyclization to yield paspaline. Paspaline is subsequently converted to 13-desoxypaspaline by the cytochrome P450 monooxygenase janP, via beta-PC-M6 in a series of alpha-face oxidations. The cytochrome P450 monooxygenase janQ is proposed to carry out sequential beta-face oxidation steps at C-7 and C-13 of 13-desoxypaspaline to form paspalicine and paspalinine respectively. The indole diterpene prenyltransferase janD may then convert paspalinine into shearinine K which is substrate of janO and/or additional enzymes for oxidation and cyclization to generate shearinine A. In Penicillium janthinellum (Penicillium vitale), this protein is Cytochrome P450 monooxygenase janQ.